The following is a 300-amino-acid chain: Probable alpha-L-glutamate ligase (300 aa).

The region spanning Leu-104–Glu-287 is the ATP-grasp domain. ATP-binding positions include Lys-141, Glu-178–Tyr-179, Asp-187, and Arg-211–Asn-213. Residues Asp-248, Glu-260, and Asn-262 each coordinate Mg(2+). Mn(2+) is bound by residues Asp-248, Glu-260, and Asn-262.

This sequence belongs to the RimK family. Mg(2+) is required as a cofactor. Requires Mn(2+) as cofactor.

This is Probable alpha-L-glutamate ligase from Serratia proteamaculans (strain 568).